The following is a 339-amino-acid chain: RxLR effector protein SFI4 (339 aa).

A signal peptide spans 1–24 (MRVLRVTFLWALLLLVAFSASVYA). The RxLR-dEER motif lies at 51–74 (RGLRNSGMKLNDAKDFKGAIAKLR). 4 TPR repeats span residues 106 to 139 (AQIL…VEKI), 190 to 223 (IEAS…QNGE), 232 to 265 (AELY…FRQR), and 274 to 307 (AFSL…AVQI).

It belongs to the RxLR effector family.

It localises to the secreted. Its subcellular location is the host nucleus. The protein resides in the host cytoplasm. Effector that suppresses flg22-induced post-translational MAP kinase activation in tomato but not in Arabidopsis. The perception of highly conserved pathogen- or microbe-associated molecular patterns (PAMPs/MAMPs), such as flg22, triggers converging signaling pathways recruiting MAP kinase cascades and inducing transcriptional re-programming, yielding a generic antimicrobial response. This chain is RxLR effector protein SFI4, found in Phytophthora infestans (strain T30-4) (Potato late blight agent).